Consider the following 138-residue polypeptide: Endonuclease V (138 aa).

Thr2 functions as the Nucleophile; via amide nitrogen in the catalytic mechanism. Catalysis depends on Glu23, which acts as the Proton acceptor.

Monomer.

The enzyme catalyses Cleaves the N-glycosidic bond between the 5'-pyrimidine residue in cyclobutadipyrimidine (in DNA) and the corresponding deoxy-D-ribose residue.. The catalysed reaction is 2'-deoxyribonucleotide-(2'-deoxyribose 5'-phosphate)-2'-deoxyribonucleotide-DNA = a 3'-end 2'-deoxyribonucleotide-(2,3-dehydro-2,3-deoxyribose 5'-phosphate)-DNA + a 5'-end 5'-phospho-2'-deoxyribonucleoside-DNA + H(+). In terms of biological role, participates in the repair of UV-damaged DNA by excising pyrimidine dimers that are the major UV-lesions. DNA glycosylase activity hydrolyzes the glycosylic bond of the 5' pyrimidine of the dimer. This leaves apurinic/apyrimidic (AP) sites in the DNA. These AP sites are removed by the AP lyase activity which cleaves the intrapyrimidine phosphodiester bond. Catalysis proceeds via a protonated imine covalent intermediate between the alpha-amino group of the N-terminal threonine residue and the C1' of the deoxyribose sugar of the 5' pyrimidine at the dimer site. In Enterobacteria phage T4 (Bacteriophage T4), this protein is Endonuclease V.